The primary structure comprises 322 residues: MIVFATAPIQTERPRLPQDLFGAIADLKRELNAVILAHYYQEPDIQDVADYIGDSLGLSQQAASTNAEVIVFAGVHFMAETAKILNPDKQVLLPDLEAGCSLAESCPPANFAEFKAAHRNHLVISYINCTAEIKAMSDIICTSSNAVKIVRQIPPEQPIIFAPDRNLGRYVMAQTGREMVLWQGSCIVHETFSEKKIIQLQLQHPEAEVIAHPECEAAVLNRARFIGSTTALLNYVQKSVSPAFIVATEPGIIHQMQRQNPDKLYIPAPPFNNCNCNECPFMRLNTLEKLYWAMRRRAPEVTVPETIRLQALRPIQRMLEMS.

Iminosuccinate-binding residues include His38 and Ser55. Residue Cys100 participates in [4Fe-4S] cluster binding. Residues 126–128 (YIN) and Ser143 each bind iminosuccinate. Residue Cys186 coordinates [4Fe-4S] cluster. Residues 212–214 (HPE) and Thr229 contribute to the iminosuccinate site. Cys279 is a binding site for [4Fe-4S] cluster.

This sequence belongs to the quinolinate synthase family. Type 2 subfamily. It depends on [4Fe-4S] cluster as a cofactor.

The protein resides in the cytoplasm. It carries out the reaction iminosuccinate + dihydroxyacetone phosphate = quinolinate + phosphate + 2 H2O + H(+). It participates in cofactor biosynthesis; NAD(+) biosynthesis; quinolinate from iminoaspartate: step 1/1. Functionally, catalyzes the condensation of iminoaspartate with dihydroxyacetone phosphate to form quinolinate. This chain is Quinolinate synthase, found in Cyanothece sp. (strain PCC 7425 / ATCC 29141).